The primary structure comprises 771 residues: Chaperone protein dnaK3 (771 aa).

The residue at position 198 (Thr-198) is a Phosphothreonine; by autocatalysis. The segment at 624–771 is disordered; it reads FDDDDDYYNR…GWDDDDDDWF (148 aa). Basic and acidic residues-rich tracts occupy residues 630 to 652 and 708 to 734; these read YYNR…RYDD and YDDR…RENA.

This sequence belongs to the heat shock protein 70 family.

Functionally, acts as a chaperone. The protein is Chaperone protein dnaK3 (dnaK3) of Synechocystis sp. (strain ATCC 27184 / PCC 6803 / Kazusa).